The sequence spans 333 residues: Nucleoid-associated protein (333 aa).

The protein belongs to the YejK family.

Its subcellular location is the cytoplasm. It localises to the nucleoid. The polypeptide is Nucleoid-associated protein (Metapseudomonas resinovorans (Pseudomonas resinovorans)).